Reading from the N-terminus, the 384-residue chain is SAGA complex subunit Spt3 (384 aa).

The protein belongs to the SPT3 family. Component of the Spt-Ada-Gcn5 acetyltransferase (SAGA) complex consisting of wda/Taf5L, Saf6, Taf9, Taf10b, Taf12, Ada1, Spt3, Spt7, Spt20, Sf3b3, Sf3b5, Nipped-A/Tra1, a histone acetyltransferase (HAT) module made up of Gcn5, Ada2b (Isoform B), Ada3 and Sgf29, and a deubiquitinase (DUB) module made up of not/nonstop, Sgf11 and e(y)2 tethered to SAGA by Atxn7. Taf5 and Taf10, which has partially redundant properties with Taf10b, may also be part of this complex.

It is found in the nucleus. It localises to the chromosome. Its function is as follows. Component of the transcription regulatory complex SAGA, a multiprotein complex that activates transcription by remodeling chromatin and mediating histone acetylation and deubiquitination. The SAGA complex predominantly acetylates histone H3. Required for oogenesis; involved in transcriptional activation. The sequence is that of SAGA complex subunit Spt3 from Drosophila melanogaster (Fruit fly).